Consider the following 318-residue polypeptide: L-lactate dehydrogenase (318 aa).

NAD(+)-binding positions include Val-18, Asp-39, Lys-44, Tyr-69, and Gly-83–Ala-84. Residues Gln-86 and Arg-92 each coordinate substrate. NAD(+) is bound by residues Ser-105, Val-122–Asn-124, and Ser-147. Asn-124 to Asp-127 provides a ligand contact to substrate. Asp-152–Arg-155 contacts substrate. The Proton acceptor role is filled by His-179. A Phosphotyrosine modification is found at Tyr-225. Thr-234 lines the substrate pocket.

Belongs to the LDH/MDH superfamily. LDH family. Homotetramer.

It is found in the cytoplasm. The enzyme catalyses (S)-lactate + NAD(+) = pyruvate + NADH + H(+). It functions in the pathway fermentation; pyruvate fermentation to lactate; (S)-lactate from pyruvate: step 1/1. Its function is as follows. Catalyzes the conversion of lactate to pyruvate. This Clostridium botulinum (strain 657 / Type Ba4) protein is L-lactate dehydrogenase.